Consider the following 75-residue polypeptide: Large ribosomal subunit protein bL31 (75 aa).

4 residues coordinate Zn(2+): cysteine 16, cysteine 18, cysteine 38, and cysteine 41.

The protein belongs to the bacterial ribosomal protein bL31 family. Type A subfamily. In terms of assembly, part of the 50S ribosomal subunit. Requires Zn(2+) as cofactor.

Binds the 23S rRNA. This is Large ribosomal subunit protein bL31 from Nocardioides sp. (strain ATCC BAA-499 / JS614).